The primary structure comprises 86 residues: MEGRRFAAVLILTICMLAPGTGTLLPKDRPSLCDLPADSGSGTKAEKRIYYNSARKQCLRFDYTGQGGNENNFRRTYDCQRTCLYT.

The signal sequence occupies residues 1 to 26 (MEGRRFAAVLILTICMLAPGTGTLLP). The BPTI/Kunitz inhibitor domain maps to 33–83 (CDLPADSGSGTKAEKRIYYNSARKQCLRFDYTGQGGNENNFRRTYDCQRTC). Intrachain disulfides connect Cys-33-Cys-83 and Cys-58-Cys-79. Thr-86 bears the Threonine amide mark.

The protein belongs to the venom Kunitz-type family. Contains 2 disulfide bonds instead of 3, as for all Kunitz domain proteins. A double Cys-mutant carrying an additional Cys bridge does not show difference in activity with the natural peptide. However, there are some differences in the kinetics of binding of both peptides to the channel. As to expression, expressed by the venom duct.

It is found in the secreted. In terms of biological role, blocks specifically voltage-activated potassium channels (Kv) of the Shaker family (IC(50)=1.33 nM). In Conus striatus (Striated cone), this protein is Kunitz-type conkunitzin-S1.